The primary structure comprises 209 residues: MARGPLAARGLRLLLPLLPLLPLLPLPQVALGFADGSCDPSDQCPPQARWSSLWHVGLILLAVLLLLLCGVTAGCVRFCCLRKQAQAQPHLPPARQPCDVAVIPMDSDSPVHSTVTSYSSVQYPLGMRLPLPFGELDLDSMAPPAYSLYTPEPPPSYDEAVKMAKPREEGPALSQKPSPLLGASGLETTPVPQESGPNTQLPPCSPGAP.

A signal peptide spans 1–32; that stretch reads MARGPLAARGLRLLLPLLPLLPLLPLPQVALG. A helical membrane pass occupies residues 56–76; sequence VGLILLAVLLLLLCGVTAGCV. Residues 145 to 209 are disordered; sequence AYSLYTPEPP…QLPPCSPGAP (65 aa). The span at 159 to 170 shows a compositional bias: basic and acidic residues; sequence EAVKMAKPREEG. The span at 186-202 shows a compositional bias: polar residues; it reads LETTPVPQESGPNTQLP.

The protein resides in the membrane. The polypeptide is Transmembrane protein 52 (TMEM52) (Homo sapiens (Human)).